The following is a 1034-amino-acid chain: Presequence protease, mitochondrial (1034 aa).

Residues 1-29 (MLKGGMLSRWKMWSPQYKILRNHLINFKS) constitute a mitochondrion transit peptide. Histidine 128 is a Zn(2+) binding site. Glutamate 131 functions as the Proton acceptor in the catalytic mechanism. The Zn(2+) site is built by histidine 132 and glutamate 229.

It belongs to the peptidase M16 family. PreP subfamily. As to quaternary structure, homodimer. Zn(2+) serves as cofactor.

The protein resides in the mitochondrion. Functionally, ATP-independent protease that degrades mitochondrial transit peptides after their cleavage. Also degrades other unstructured peptides. This is Presequence protease, mitochondrial from Drosophila melanogaster (Fruit fly).